A 510-amino-acid chain; its full sequence is Histidine ammonia-lyase (510 aa).

Positions 143-145 (ASG) form a cross-link, 5-imidazolinone (Ala-Gly). Serine 144 is modified (2,3-didehydroalanine (Ser)).

The protein belongs to the PAL/histidase family. Contains an active site 4-methylidene-imidazol-5-one (MIO), which is formed autocatalytically by cyclization and dehydration of residues Ala-Ser-Gly.

Its subcellular location is the cytoplasm. The catalysed reaction is L-histidine = trans-urocanate + NH4(+). The protein operates within amino-acid degradation; L-histidine degradation into L-glutamate; N-formimidoyl-L-glutamate from L-histidine: step 1/3. This chain is Histidine ammonia-lyase, found in Aliivibrio fischeri (strain ATCC 700601 / ES114) (Vibrio fischeri).